Here is a 204-residue protein sequence, read N- to C-terminus: Guanylate kinase (204 aa).

One can recognise a Guanylate kinase-like domain in the interval 5-184 (GLLIVLSGPS…ACDKIKAIVL (180 aa)). 12–19 (GPSGVGKG) lines the ATP pocket.

This sequence belongs to the guanylate kinase family.

Its subcellular location is the cytoplasm. The catalysed reaction is GMP + ATP = GDP + ADP. Functionally, essential for recycling GMP and indirectly, cGMP. The sequence is that of Guanylate kinase (gmk) from Bacillus subtilis (strain 168).